A 108-amino-acid polypeptide reads, in one-letter code: Phosphoribosyl-AMP cyclohydrolase (108 aa).

Aspartate 72 is a binding site for Mg(2+). A Zn(2+)-binding site is contributed by cysteine 73. Mg(2+) contacts are provided by aspartate 74 and aspartate 76. 2 residues coordinate Zn(2+): cysteine 89 and cysteine 96.

Belongs to the PRA-CH family. In terms of assembly, homodimer. The cofactor is Mg(2+). Zn(2+) is required as a cofactor.

It localises to the cytoplasm. The catalysed reaction is 1-(5-phospho-beta-D-ribosyl)-5'-AMP + H2O = 1-(5-phospho-beta-D-ribosyl)-5-[(5-phospho-beta-D-ribosylamino)methylideneamino]imidazole-4-carboxamide. It participates in amino-acid biosynthesis; L-histidine biosynthesis; L-histidine from 5-phospho-alpha-D-ribose 1-diphosphate: step 3/9. In terms of biological role, catalyzes the hydrolysis of the adenine ring of phosphoribosyl-AMP. The polypeptide is Phosphoribosyl-AMP cyclohydrolase (Archaeoglobus fulgidus (strain ATCC 49558 / DSM 4304 / JCM 9628 / NBRC 100126 / VC-16)).